A 113-amino-acid polypeptide reads, in one-letter code: Antimicrobial peptide microplusin (113 aa).

The first 19 residues, 1–19 (MKSLLVLALLAFGAVLVSA), serve as a signal peptide directing secretion. Disulfide bonds link Cys25-Cys71, Cys38-Cys99, and Cys60-Cys65.

Its subcellular location is the secreted. Functionally, has bacteriostatic activity against Gram-positive bacteria, but not against Gram-negative bacteria. Has fungistatic activity against some but not all fungi. Binds and sequesters copper and iron ions. Copper-chelating activity is crucial for antimicrobial activity against M.luteus. The polypeptide is Antimicrobial peptide microplusin (Argas monolakensis (Mono lake bird tick)).